Consider the following 333-residue polypeptide: 4-hydroxy-3-methylbut-2-enyl diphosphate reductase (333 aa).

Cysteine 34 is a [4Fe-4S] cluster binding site. Histidine 63 and histidine 96 together coordinate (2E)-4-hydroxy-3-methylbut-2-enyl diphosphate. The dimethylallyl diphosphate site is built by histidine 63 and histidine 96. Isopentenyl diphosphate contacts are provided by histidine 63 and histidine 96. Residue cysteine 118 coordinates [4Fe-4S] cluster. Histidine 146 is a (2E)-4-hydroxy-3-methylbut-2-enyl diphosphate binding site. Histidine 146 serves as a coordination point for dimethylallyl diphosphate. Histidine 146 is a binding site for isopentenyl diphosphate. Glutamate 148 (proton donor) is an active-site residue. Threonine 186 is a (2E)-4-hydroxy-3-methylbut-2-enyl diphosphate binding site. A [4Fe-4S] cluster-binding site is contributed by cysteine 216. Residues serine 244, serine 245, asparagine 246, and serine 289 each contribute to the (2E)-4-hydroxy-3-methylbut-2-enyl diphosphate site. Serine 244, serine 245, asparagine 246, and serine 289 together coordinate dimethylallyl diphosphate. Serine 244, serine 245, asparagine 246, and serine 289 together coordinate isopentenyl diphosphate.

It belongs to the IspH family. The cofactor is [4Fe-4S] cluster.

The enzyme catalyses isopentenyl diphosphate + 2 oxidized [2Fe-2S]-[ferredoxin] + H2O = (2E)-4-hydroxy-3-methylbut-2-enyl diphosphate + 2 reduced [2Fe-2S]-[ferredoxin] + 2 H(+). The catalysed reaction is dimethylallyl diphosphate + 2 oxidized [2Fe-2S]-[ferredoxin] + H2O = (2E)-4-hydroxy-3-methylbut-2-enyl diphosphate + 2 reduced [2Fe-2S]-[ferredoxin] + 2 H(+). Its pathway is isoprenoid biosynthesis; dimethylallyl diphosphate biosynthesis; dimethylallyl diphosphate from (2E)-4-hydroxy-3-methylbutenyl diphosphate: step 1/1. The protein operates within isoprenoid biosynthesis; isopentenyl diphosphate biosynthesis via DXP pathway; isopentenyl diphosphate from 1-deoxy-D-xylulose 5-phosphate: step 6/6. Catalyzes the conversion of 1-hydroxy-2-methyl-2-(E)-butenyl 4-diphosphate (HMBPP) into a mixture of isopentenyl diphosphate (IPP) and dimethylallyl diphosphate (DMAPP). Acts in the terminal step of the DOXP/MEP pathway for isoprenoid precursor biosynthesis. The protein is 4-hydroxy-3-methylbut-2-enyl diphosphate reductase of Mycobacterium sp. (strain JLS).